A 496-amino-acid chain; its full sequence is Glycogen synthase (496 aa).

K15 serves as a coordination point for ADP-alpha-D-glucose.

Belongs to the glycosyltransferase 1 family. Bacterial/plant glycogen synthase subfamily.

It carries out the reaction [(1-&gt;4)-alpha-D-glucosyl](n) + ADP-alpha-D-glucose = [(1-&gt;4)-alpha-D-glucosyl](n+1) + ADP + H(+). Its pathway is glycan biosynthesis; glycogen biosynthesis. Synthesizes alpha-1,4-glucan chains using ADP-glucose. The chain is Glycogen synthase from Natranaerobius thermophilus (strain ATCC BAA-1301 / DSM 18059 / JW/NM-WN-LF).